The following is a 264-amino-acid chain: Endochitinase At2g43590 (264 aa).

Residues 1 to 24 (MAFTKISLVLLLCLLGFFSETVKS) form the signal peptide. The Chitin-binding type-1 domain occupies 25–59 (QNCGCAPNLCCSQFGYCGTDDAYCGVGCRSGPCRG). Disulfide bonds link C27–C35, C29–C41, C34–C48, and C52–C57. The interval 66 to 264 (GSVGSIVTQG…GVDPGPNLSC (199 aa)) is catalytic. The Proton donor role is filled by E128. The N-linked (GlcNAc...) asparagine glycan is linked to N261.

It belongs to the glycosyl hydrolase 19 family. Chitinase class I subfamily.

The enzyme catalyses Random endo-hydrolysis of N-acetyl-beta-D-glucosaminide (1-&gt;4)-beta-linkages in chitin and chitodextrins.. This chain is Endochitinase At2g43590, found in Arabidopsis thaliana (Mouse-ear cress).